The chain runs to 358 residues: Heme A synthase (358 aa).

A run of 8 helical transmembrane segments spans residues 22-42 (IQVW…VGGA), 107-127 (VLGR…WVTK), 133-153 (IFLQ…IGWW), 172-192 (LAIH…LSRG), 208-228 (FAGW…LVAG), 269-289 (FVHR…ALYV), 302-322 (AIFL…TLLH), and 324-344 (VPIS…CFSV). A heme-binding site is contributed by His271. Position 332 (His332) interacts with heme.

The protein belongs to the COX15/CtaA family. Type 2 subfamily. In terms of assembly, interacts with CtaB. The cofactor is heme b.

The protein localises to the cell membrane. The catalysed reaction is Fe(II)-heme o + 2 A + H2O = Fe(II)-heme a + 2 AH2. The protein operates within porphyrin-containing compound metabolism; heme A biosynthesis; heme A from heme O: step 1/1. In terms of biological role, catalyzes the conversion of heme O to heme A by two successive hydroxylations of the methyl group at C8. The first hydroxylation forms heme I, the second hydroxylation results in an unstable dihydroxymethyl group, which spontaneously dehydrates, resulting in the formyl group of heme A. In Bartonella bacilliformis (strain ATCC 35685 / KC583 / Herrer 020/F12,63), this protein is Heme A synthase.